A 136-amino-acid chain; its full sequence is Protein NrdI (136 aa).

It belongs to the NrdI family.

Probably involved in ribonucleotide reductase function. In Salmonella paratyphi A (strain ATCC 9150 / SARB42), this protein is Protein NrdI.